A 244-amino-acid chain; its full sequence is MQMNFSGLRALVTGAGKGIGRDTVKALHVSGARVVAVTRTNGDLVSLSQECPGIEPVCVDLGDWEATERALGGVGPVDLLVNNAAVALMQPFLDTTKEVFDRSFNVNLRSVFQVSQIVARSMIERGVPGSIVNVSSMVSHVTYPGLAAYSSTKGAMTMLTKSMAMELGPHKIRVNSVNPTVVLTAMGRSVTSDPELARKLKERHPMRKFAEVEDVVNSILFLLSDRSASTSGSSIFVDAGYLAS.

Position 11-39 (11-39) interacts with NADP(+); the sequence is LVTGAGKGIGRDTVKALHVSGARVVAVTR. Ser-136 lines the substrate pocket. Tyr-149 functions as the Proton acceptor in the catalytic mechanism. Position 176 is a phosphoserine (Ser-176).

It belongs to the short-chain dehydrogenases/reductases (SDR) family. Homotetramer. As to expression, lung (ciliated cells, non-ciliated bronchiolar cells and type-II alveolar pneumocytes). Low expression in all extrapulmonary tissues, including adipose tissue.

The protein localises to the mitochondrion matrix. It carries out the reaction a secondary alcohol + NADP(+) = a ketone + NADPH + H(+). Allosteric enzyme exhibiting negative cooperativity. Activated 2-5 fold by fatty acids. Functionally, may function in the pulmonary metabolism of endogenous carbonyl compounds, such as aliphatic aldehydes and ketones derived from lipid peroxidation, 3-ketosteroids and fatty aldehydes, as well as in xenobiotic metabolism. This is Carbonyl reductase [NADPH] 2 (CBR2) from Sus scrofa (Pig).